A 62-amino-acid polypeptide reads, in one-letter code: UPF0291 protein CLM_2971 (62 aa).

This sequence belongs to the UPF0291 family.

The protein localises to the cytoplasm. This is UPF0291 protein CLM_2971 from Clostridium botulinum (strain Kyoto / Type A2).